The chain runs to 201 residues: 3-mercaptopropionate dioxygenase (201 aa).

The Fe cation site is built by H89, H91, and H142.

It belongs to the cysteine dioxygenase family. Forms homodimer in the crystal; however, there is no evidence that the dimer exists under physiological conditions or has biological significance. It depends on Fe(2+) as a cofactor.

The catalysed reaction is 3-sulfanylpropanoate + O2 = 3-sulfinopropanoate + H(+). Functionally, thiol dioxygenase that catalyzes the dioxygenation of 3-mercaptopropionate (3-MPA) to 3-sulfinopropionate (3-SPA). To a lesser extent (40-fold lower efficiency), is also able to oxidize cysteine to cysteine sulfinate (CSA). Cannot use N-acetyl-L-cysteine, homocysteine, and cysteamine as substrates. The physiological role of this enzyme is unclear. This Pseudomonas aeruginosa (strain ATCC 15692 / DSM 22644 / CIP 104116 / JCM 14847 / LMG 12228 / 1C / PRS 101 / PAO1) protein is 3-mercaptopropionate dioxygenase.